The following is a 666-amino-acid chain: Endogenous retrovirus group K member 6 Gag polyprotein (666 aa).

Residue Gly2 is the site of N-myristoyl glycine attachment. The segment at 165–264 is disordered; that stretch reads GKGPELVGPS…APPSRQGSKL (100 aa). A compositionally biased stretch (pro residues) spans 232 to 247; the sequence is GMPPAPQGRAPYPQPP. CCHC-type zinc fingers lie at residues 544–561 and 580–597; these read RKCYNCGQIGHLKKNCPV and DLCPRCKKGKHWASQCRS. Residues 598-642 form a disordered region; that stretch reads KFDKNGQPLSGNEQRGQPQAPQQTGAFPIQPFVPQGFQGQQPPLS. Polar residues predominate over residues 604-622; that stretch reads QPLSGNEQRGQPQAPQQTG. A compositionally biased stretch (low complexity) spans 624–640; that stretch reads FPIQPFVPQGFQGQQPP.

This sequence belongs to the beta type-B retroviral Gag protein family. HERV class-II K(HML-2) gag subfamily. Post-translationally, myristoylation is essential for retroviral assembly. Alteration of the glycine residue leads to a block in the budding of particles and an accumulation of Gag inside the cell. Specific enzymatic cleavages may yield mature proteins.

Its subcellular location is the cell membrane. Its function is as follows. The products of the Gag polyproteins of infectious retroviruses perform highly complex orchestrated tasks during the assembly, budding, maturation, and infection stages of the viral replication cycle. During viral assembly, the proteins form membrane associations and self-associations that ultimately result in budding of an immature virion from the infected cell. Gag precursors also function during viral assembly to selectively bind and package two plus strands of genomic RNA. Endogenous Gag proteins may have kept, lost or modified their original function during evolution. The chain is Endogenous retrovirus group K member 6 Gag polyprotein (ERVK-6) from Homo sapiens (Human).